The chain runs to 839 residues: Translation initiation factor IF-2 (839 aa).

Basic and acidic residues-rich tracts occupy residues 1 to 12 and 57 to 67; these read MSDNEIKNETPK and AEAKAQEKQAA. Disordered stretches follow at residues 1 to 21 and 57 to 244; these read MSDN…RRTK and AEAK…GASL. The segment covering 68–90 has biased composition (low complexity); the sequence is EKAAQAQTEAKAQTEQACTTKKT. Basic and acidic residues-rich tracts occupy residues 104–167, 185–199, and 212–233; these read PKTE…REET, READ…EGNR, and GGRE…DIKG. One can recognise a tr-type G domain in the interval 338–508; the sequence is TRAPVVTIMG…ILQSEVLELT (171 aa). Positions 347–354 are G1; the sequence is GHVDHGKT. 347-354 is a GTP binding site; that stretch reads GHVDHGKT. The segment at 372 to 376 is G2; sequence GITQH. The interval 394–397 is G3; sequence DTPG. GTP-binding positions include 394-398 and 448-451; these read DTPGH and NKID. A G4 region spans residues 448–451; it reads NKID. The segment at 484-486 is G5; that stretch reads SAK.

Belongs to the TRAFAC class translation factor GTPase superfamily. Classic translation factor GTPase family. IF-2 subfamily.

It localises to the cytoplasm. In terms of biological role, one of the essential components for the initiation of protein synthesis. Protects formylmethionyl-tRNA from spontaneous hydrolysis and promotes its binding to the 30S ribosomal subunits. Also involved in the hydrolysis of GTP during the formation of the 70S ribosomal complex. This is Translation initiation factor IF-2 from Haemophilus ducreyi (strain 35000HP / ATCC 700724).